The primary structure comprises 443 residues: Elongation factor 1-alpha (443 aa).

The region spanning 5-228 (KTHINLVVIG…DTMQPPKRPY (224 aa)) is the tr-type G domain. Residues 14–21 (GHVDSGKS) are G1. 14 to 21 (GHVDSGKS) contacts GTP. Residues 70-74 (GITID) are G2. The interval 91–94 (DAPG) is G3. Residues 91 to 95 (DAPGH) and 153 to 156 (NKMD) each bind GTP. Residues 153–156 (NKMD) are G4. The segment at 192–194 (SGF) is G5.

It belongs to the TRAFAC class translation factor GTPase superfamily. Classic translation factor GTPase family. EF-Tu/EF-1A subfamily.

The protein resides in the cytoplasm. In terms of biological role, this protein promotes the GTP-dependent binding of aminoacyl-tRNA to the A-site of ribosomes during protein biosynthesis. The sequence is that of Elongation factor 1-alpha (MEF-1) from Plasmodium falciparum (isolate K1 / Thailand).